The chain runs to 270 residues: Type III pantothenate kinase (270 aa).

Residue 11–18 (DAGNSRIK) coordinates ATP. Residues Y96 and 103-106 (GSDR) contribute to the substrate site. D105 functions as the Proton acceptor in the catalytic mechanism. Residue T129 coordinates ATP. Position 195 (T195) interacts with substrate.

It belongs to the type III pantothenate kinase family. In terms of assembly, homodimer. Requires NH4(+) as cofactor. K(+) is required as a cofactor.

The protein resides in the cytoplasm. The enzyme catalyses (R)-pantothenate + ATP = (R)-4'-phosphopantothenate + ADP + H(+). It participates in cofactor biosynthesis; coenzyme A biosynthesis; CoA from (R)-pantothenate: step 1/5. In terms of biological role, catalyzes the phosphorylation of pantothenate (Pan), the first step in CoA biosynthesis. This is Type III pantothenate kinase from Paraburkholderia xenovorans (strain LB400).